Consider the following 479-residue polypeptide: ATP synthase subunit beta (479 aa).

168-175 (GGAGVGKT) contacts ATP.

Belongs to the ATPase alpha/beta chains family. As to quaternary structure, F-type ATPases have 2 components, CF(1) - the catalytic core - and CF(0) - the membrane proton channel. CF(1) has five subunits: alpha(3), beta(3), gamma(1), delta(1), epsilon(1). CF(0) has three main subunits: a(1), b(2) and c(9-12). The alpha and beta chains form an alternating ring which encloses part of the gamma chain. CF(1) is attached to CF(0) by a central stalk formed by the gamma and epsilon chains, while a peripheral stalk is formed by the delta and b chains.

Its subcellular location is the cell membrane. It catalyses the reaction ATP + H2O + 4 H(+)(in) = ADP + phosphate + 5 H(+)(out). Produces ATP from ADP in the presence of a proton gradient across the membrane. The catalytic sites are hosted primarily by the beta subunits. The sequence is that of ATP synthase subunit beta from Parafrankia sp. (strain EAN1pec).